An 835-amino-acid chain; its full sequence is Replication origin-binding protein (835 aa).

In terms of domain architecture, Helicase ATP-binding spans 54–215 (PGMSQTRPVT…SGLRGDENIH (162 aa)). 67-74 (APMGSGKT) is an ATP binding site.

This sequence belongs to the herpesviridae OriBP family. In terms of assembly, homodimer. Interacts with the major DNA-binding protein. Interacts with the helicase/primase component 52 and the polymerase accessory protein.

It is found in the host nucleus. In terms of biological role, functions as a docking protein to recruit essential components of the viral replication machinery to viral DNA origins. In the presence of the major DNA-binding protein, opens dsDNA leading to a conformational change in the origin that facilitates DNA unwinding and subsequent replication. This Homo sapiens (Human) protein is Replication origin-binding protein.